Reading from the N-terminus, the 257-residue chain is Putative hydro-lyase YcsI (257 aa).

The protein belongs to the D-glutamate cyclase family.

The sequence is that of Putative hydro-lyase YcsI (ycsI) from Bacillus subtilis (strain 168).